The sequence spans 331 residues: Centriolar satellite-associated tubulin polyglutamylase complex regulator 1 (331 aa).

Residues 1 to 111 (MLSPERLALP…HCLLQLLCPD (111 aa)) are required for interaction with PCM1. The interval 1–225 (MLSPERLALP…SCPPPALVKE (225 aa)) is required for interaction with TPGS1, LRRC49, and TTLL1. The interval 112–331 (FPLELTQKAA…STEETDESET (220 aa)) is required for interaction with TPGS2. The tract at residues 288-331 (SPEASCLPSRTPPRVGSPWRPLHHSRKVDGESDGSTEETDESET) is disordered. Residues 318-331 (ESDGSTEETDESET) are compositionally biased toward acidic residues. A Phosphoserine modification is found at serine 319.

It belongs to the CSTPP1 family. In terms of assembly, interacts with PCM1. Interacts with TTLL1, TPGS1, TPGS2 and LRRC49; the interactions link CSTPP1 to the complex TPGC. Binds to alpha-tubulin.

Its subcellular location is the cytoplasm. It localises to the cytoskeleton. It is found in the microtubule organizing center. The protein resides in the centrosome. The protein localises to the centriolar satellite. Its function is as follows. Regulator of the tubulin polyglutamylase complex (TPGC) that controls cytoskeletal organization, nuclear shape, and cilium disassembly by balancing microtubule and actin assembly. Regulates the assembly and stability of the TPGC and thereby modulates polyglutamylation of the microtubule, which antagonizes MAP4 binding. This chain is Centriolar satellite-associated tubulin polyglutamylase complex regulator 1, found in Homo sapiens (Human).